We begin with the raw amino-acid sequence, 251 residues long: 3-deoxy-manno-octulosonate cytidylyltransferase (251 aa).

This sequence belongs to the KdsB family.

The protein localises to the cytoplasm. The catalysed reaction is 3-deoxy-alpha-D-manno-oct-2-ulosonate + CTP = CMP-3-deoxy-beta-D-manno-octulosonate + diphosphate. It participates in nucleotide-sugar biosynthesis; CMP-3-deoxy-D-manno-octulosonate biosynthesis; CMP-3-deoxy-D-manno-octulosonate from 3-deoxy-D-manno-octulosonate and CTP: step 1/1. It functions in the pathway bacterial outer membrane biogenesis; lipopolysaccharide biosynthesis. Functionally, activates KDO (a required 8-carbon sugar) for incorporation into bacterial lipopolysaccharide in Gram-negative bacteria. This chain is 3-deoxy-manno-octulosonate cytidylyltransferase, found in Chromobacterium violaceum (strain ATCC 12472 / DSM 30191 / JCM 1249 / CCUG 213 / NBRC 12614 / NCIMB 9131 / NCTC 9757 / MK).